The chain runs to 286 residues: Ribosomal RNA small subunit methyltransferase H (286 aa).

S-adenosyl-L-methionine-binding positions include Gly25 to His27, Asp45, Leu79, Asp93, and Gln100.

Belongs to the methyltransferase superfamily. RsmH family.

The protein localises to the cytoplasm. The catalysed reaction is cytidine(1402) in 16S rRNA + S-adenosyl-L-methionine = N(4)-methylcytidine(1402) in 16S rRNA + S-adenosyl-L-homocysteine + H(+). Functionally, specifically methylates the N4 position of cytidine in position 1402 (C1402) of 16S rRNA. The protein is Ribosomal RNA small subunit methyltransferase H of Petrotoga mobilis (strain DSM 10674 / SJ95).